A 399-amino-acid polypeptide reads, in one-letter code: Argininosuccinate synthase (399 aa).

An ATP-binding site is contributed by Ala-8 to Thr-16. Tyr-87 lines the L-citrulline pocket. Residue Gly-117 coordinates ATP. Thr-119, Asn-123, and Asp-124 together coordinate L-aspartate. Asn-123 lines the L-citrulline pocket. Arg-127, Ser-175, Glu-259, and Tyr-271 together coordinate L-citrulline.

This sequence belongs to the argininosuccinate synthase family. Type 1 subfamily. Homotetramer.

Its subcellular location is the cytoplasm. The enzyme catalyses L-citrulline + L-aspartate + ATP = 2-(N(omega)-L-arginino)succinate + AMP + diphosphate + H(+). The protein operates within amino-acid biosynthesis; L-arginine biosynthesis; L-arginine from L-ornithine and carbamoyl phosphate: step 2/3. The protein is Argininosuccinate synthase of Corynebacterium urealyticum (strain ATCC 43042 / DSM 7109).